We begin with the raw amino-acid sequence, 462 residues long: Serine carboxypeptidase-like 28 (462 aa).

Positions 1-26 (MMITKKLYQCMCLLCMVIALLDVVSS) are cleaved as a signal peptide. 2 N-linked (GlcNAc...) asparagine glycosylation sites follow: Asn49 and Asn144. 3 disulfides stabilise this stretch: Cys93–Cys342, Cys254–Cys266, and Cys290–Cys311. Ser186 is an active-site residue. N-linked (GlcNAc...) asparagine glycosylation is present at Asn256. N-linked (GlcNAc...) asparagine glycosylation occurs at Asn334. Residues Asp379 and His434 contribute to the active site. A glycan (N-linked (GlcNAc...) asparagine) is linked at Asn454.

This sequence belongs to the peptidase S10 family. In terms of tissue distribution, expressed in seedlings, roots and senescent leaves.

Its subcellular location is the secreted. Functionally, probable carboxypeptidase. This is Serine carboxypeptidase-like 28 (SCPL28) from Arabidopsis thaliana (Mouse-ear cress).